The following is a 185-amino-acid chain: Ribosome-recycling factor (185 aa).

The protein belongs to the RRF family.

It is found in the cytoplasm. Responsible for the release of ribosomes from messenger RNA at the termination of protein biosynthesis. May increase the efficiency of translation by recycling ribosomes from one round of translation to another. This chain is Ribosome-recycling factor, found in Thermus thermophilus (strain ATCC BAA-163 / DSM 7039 / HB27).